The primary structure comprises 351 residues: Glycerol-1-phosphate dehydrogenase [NAD(P)+] (351 aa).

Residues 97–101 (GKTID) and 119–122 (TAPS) each bind NAD(+). Asp124 is a binding site for substrate. Ser128 is a binding site for NAD(+). Asp171 lines the substrate pocket. Residues Asp171 and His251 each coordinate Zn(2+). Substrate is bound at residue His255. Residue His267 coordinates Zn(2+).

It belongs to the glycerol-1-phosphate dehydrogenase family. In terms of assembly, homodimer. The cofactor is Zn(2+).

It localises to the cytoplasm. It carries out the reaction sn-glycerol 1-phosphate + NAD(+) = dihydroxyacetone phosphate + NADH + H(+). The enzyme catalyses sn-glycerol 1-phosphate + NADP(+) = dihydroxyacetone phosphate + NADPH + H(+). The protein operates within membrane lipid metabolism; glycerophospholipid metabolism. Functionally, catalyzes the NAD(P)H-dependent reduction of dihydroxyacetonephosphate (DHAP or glycerone phosphate) to glycerol 1-phosphate (G1P). The G1P thus generated is used as the glycerophosphate backbone of phospholipids in the cellular membranes of Archaea. The polypeptide is Glycerol-1-phosphate dehydrogenase [NAD(P)+] (Metallosphaera sedula (strain ATCC 51363 / DSM 5348 / JCM 9185 / NBRC 15509 / TH2)).